Reading from the N-terminus, the 460-residue chain is Argininosuccinate lyase (460 aa).

Belongs to the lyase 1 family. Argininosuccinate lyase subfamily.

It is found in the cytoplasm. It carries out the reaction 2-(N(omega)-L-arginino)succinate = fumarate + L-arginine. It functions in the pathway amino-acid biosynthesis; L-arginine biosynthesis; L-arginine from L-ornithine and carbamoyl phosphate: step 3/3. This is Argininosuccinate lyase from Parvibaculum lavamentivorans (strain DS-1 / DSM 13023 / NCIMB 13966).